A 95-amino-acid chain; its full sequence is MAISKSEVEYIAKLARLKFTEEEIEAMAQELSKILDYVNKLNELDTENVEPTAHIVPIHNVFREDEVKPSMPREKVLMNAPFTEQGCFKVPKIIE.

This sequence belongs to the GatC family. Heterotrimer of A, B and C subunits.

The enzyme catalyses L-glutamyl-tRNA(Gln) + L-glutamine + ATP + H2O = L-glutaminyl-tRNA(Gln) + L-glutamate + ADP + phosphate + H(+). The catalysed reaction is L-aspartyl-tRNA(Asn) + L-glutamine + ATP + H2O = L-asparaginyl-tRNA(Asn) + L-glutamate + ADP + phosphate + 2 H(+). Allows the formation of correctly charged Asn-tRNA(Asn) or Gln-tRNA(Gln) through the transamidation of misacylated Asp-tRNA(Asn) or Glu-tRNA(Gln) in organisms which lack either or both of asparaginyl-tRNA or glutaminyl-tRNA synthetases. The reaction takes place in the presence of glutamine and ATP through an activated phospho-Asp-tRNA(Asn) or phospho-Glu-tRNA(Gln). The protein is Aspartyl/glutamyl-tRNA(Asn/Gln) amidotransferase subunit C of Caldanaerobacter subterraneus subsp. tengcongensis (strain DSM 15242 / JCM 11007 / NBRC 100824 / MB4) (Thermoanaerobacter tengcongensis).